Here is a 631-residue protein sequence, read N- to C-terminus: Eukaryotic translation initiation factor 3 subunit L (631 aa).

A PCI domain is found at 335–526 (TFVSVLIFFI…AETTLLDGER (192 aa)). The interval 571 to 631 (KSAPLPVRKP…PKSRQARIAA (61 aa)) is disordered. A compositionally biased stretch (low complexity) spans 580–612 (PASSSAPAPATTAAPISKSGESAAPAPAEAPAA).

This sequence belongs to the eIF-3 subunit L family. In terms of assembly, component of the eukaryotic translation initiation factor 3 (eIF-3) complex.

It localises to the cytoplasm. Its function is as follows. Component of the eukaryotic translation initiation factor 3 (eIF-3) complex, which is involved in protein synthesis of a specialized repertoire of mRNAs and, together with other initiation factors, stimulates binding of mRNA and methionyl-tRNAi to the 40S ribosome. The eIF-3 complex specifically targets and initiates translation of a subset of mRNAs involved in cell proliferation. This chain is Eukaryotic translation initiation factor 3 subunit L, found in Cryptococcus neoformans var. neoformans serotype D (strain B-3501A) (Filobasidiella neoformans).